Here is a 519-residue protein sequence, read N- to C-terminus: MKKSTIWILGIIMGLSFLSLLYLQVSYIEEMVKMRKEQFNTSVRNALFQVSKDVEYDETQRWLLEDITEAERRALAQSSSTTEQKNGLIQQSERYRFKSPDGTLYSEFELKMITTEPSKVPKAMISERHGRNTIPQTSRSLTDAIKNRYMYQRFLLDDVALRMIYKASDKSIGERVNFKKLDNYLKSNFINNGVELLYHFSVIDKDGREVYRCSDYEDGGSEDSYTQPLFQNDPPAKMSIVKVHFPGKKDYIFDSVSFMIPSMIFTIVLLITFIFTIYIVFRQKKLTEMKNDFINNMTHEFKTPISTISLAAQMLKDPAVGKSPQMFQHISGVINDETKRLRFQVEKVLQMSMFDRQKATLKMKELDANELITGVINTFALKVERYNGKITSNLEATNPVIFADEMHITNVIFNLMDNAVKYKKPEEDLVLNVRTWNEPGKLMISIQDNGIGIKKENLKKVFDKFYRVHTGNLHDVKGFGLGLAYVKKIIQDHKGTIRAESELNVGTKFIIALPLLKND.

The next 2 helical transmembrane spans lie at Thr-5 to Val-25 and Ile-260 to Val-280. A Histidine kinase domain is found at Asn-296–Lys-517. His-299 is modified (phosphohistidine; by autocatalysis).

It localises to the cell membrane. It catalyses the reaction ATP + protein L-histidine = ADP + protein N-phospho-L-histidine.. Member of the two-component regulatory system RprX/RprY. May activate RprY by phosphorylation. This is Sensor protein RprX (rprX) from Bacteroides fragilis (strain YCH46).